Here is a 1072-residue protein sequence, read N- to C-terminus: Zn(2)-C6 fungal-type transcription factor FTF1a (1072 aa).

Residues 178–205 (CMACRRKKIRCSGEKPACKHCLRSRILC) constitute a DNA-binding region (zn(2)-C6 fungal-type).

The protein localises to the nucleus. Zn(2)-C6 fungal-type transcription factor that has a role in the establishment of the fungus within the plant and/or the progress of the disease. Regulates the expression of virulence factors such as SIX1 and SIX6. This chain is Zn(2)-C6 fungal-type transcription factor FTF1a, found in Fusarium oxysporum f. sp. lycopersici (strain 4287 / CBS 123668 / FGSC 9935 / NRRL 34936) (Fusarium vascular wilt of tomato).